A 383-amino-acid polypeptide reads, in one-letter code: Homoserine O-succinyltransferase (383 aa).

Residues 51–360 enclose the AB hydrolase-1 domain; sequence NAILLCHALS…EAEHGHDSFL (310 aa). The Nucleophile role is filled by Ser157. Arg227 provides a ligand contact to substrate. Catalysis depends on residues Asp323 and His356. Asp357 is a binding site for substrate.

The protein belongs to the AB hydrolase superfamily. MetX family. As to quaternary structure, homodimer.

It localises to the cytoplasm. The enzyme catalyses L-homoserine + succinyl-CoA = O-succinyl-L-homoserine + CoA. Its pathway is amino-acid biosynthesis; L-methionine biosynthesis via de novo pathway; O-succinyl-L-homoserine from L-homoserine: step 1/1. Its function is as follows. Transfers a succinyl group from succinyl-CoA to L-homoserine, forming succinyl-L-homoserine. In Acidithiobacillus ferrooxidans (strain ATCC 23270 / DSM 14882 / CIP 104768 / NCIMB 8455) (Ferrobacillus ferrooxidans (strain ATCC 23270)), this protein is Homoserine O-succinyltransferase.